Here is a 231-residue protein sequence, read N- to C-terminus: Class A basic helix-loop-helix protein 9 (231 aa).

A bHLH domain is found at Ala61–Leu113. The segment at Gln135–Ser168 is disordered. Positions Ala137–Val149 are enriched in polar residues.

In terms of assembly, heterodimer. Efficient DNA binding requires dimerization with another bHLH protein. Interacts with TCF3, TCF4, and TCF12.

Its subcellular location is the nucleus. Transcription factor, which play a role in limb development. Is an essential player in the regulatory network governing transcription of genes implicated in limb morphogenesis. The sequence is that of Class A basic helix-loop-helix protein 9 (Bhlha9) from Mus musculus (Mouse).